A 342-amino-acid chain; its full sequence is Anthranilate phosphoribosyltransferase (342 aa).

5-phospho-alpha-D-ribose 1-diphosphate contacts are provided by residues Gly-81, 84 to 85 (GD), Thr-89, 91 to 94 (NVST), 109 to 117 (KHGNRAASS), and Ala-121. Gly-81 lines the anthranilate pocket. Ser-93 is a binding site for Mg(2+). Asn-112 contributes to the anthranilate binding site. Arg-167 is a binding site for anthranilate. Mg(2+) contacts are provided by Asp-226 and Glu-227.

Belongs to the anthranilate phosphoribosyltransferase family. Homodimer. The cofactor is Mg(2+).

It carries out the reaction N-(5-phospho-beta-D-ribosyl)anthranilate + diphosphate = 5-phospho-alpha-D-ribose 1-diphosphate + anthranilate. The protein operates within amino-acid biosynthesis; L-tryptophan biosynthesis; L-tryptophan from chorismate: step 2/5. In terms of biological role, catalyzes the transfer of the phosphoribosyl group of 5-phosphorylribose-1-pyrophosphate (PRPP) to anthranilate to yield N-(5'-phosphoribosyl)-anthranilate (PRA). The sequence is that of Anthranilate phosphoribosyltransferase from Beijerinckia indica subsp. indica (strain ATCC 9039 / DSM 1715 / NCIMB 8712).